The chain runs to 192 residues: uncharacterized protein (192 aa).

Helical transmembrane passes span 5–22, 42–61, 66–88, 101–118, 122–139, and 159–181; these read VPPLFFVCALFFAEGIGL, FLFLGGILITGNWVCIHYVY, LRFLTPLGVGASAFCLSTCSGKL, WGLLYALVFYITYTALNL, LVMWGVSCVGFLCFSTIL, and ALLLASMGFIALSLYGTDELWLF.

The protein resides in the cell membrane. This is an uncharacterized protein from Treponema pallidum (strain Nichols).